The sequence spans 293 residues: MIDLTIKCKEKVPSRAFVVGYPIHHSKSPKIHNFWLKQYGLQGEYLAQEVKLEEFSDFLTSTKKRGFCGGNVTLPYKQEAFRLANYKDEVATMIGAANTLWYEGDKLCATNSDAYGFSANLDDSAPNWVGETALIFGAGGAARAILYALKKRGFERICLLNRTRQRADNLAEHFGKPVEVHDWHNVGEILYEADLIVNTTSVGMTDPHGWKTGSLFCDFQKTKTTTLVTDIVYTPLTTPFLQQAKAHGLRTVDGLGMLLHQAVPGFERWFGITPQVTKALRTKILEDMGEERG.

Residues serine 26–serine 28 and threonine 73 each bind shikimate. The active-site Proton acceptor is the lysine 77. Residue glutamate 89 participates in NADP(+) binding. Shikimate contacts are provided by asparagine 98 and aspartate 113. Residues glycine 137 to alanine 141, asparagine 161 to arginine 166, and isoleucine 231 each bind NADP(+). Shikimate is bound at residue tyrosine 233. Glycine 254 is a binding site for NADP(+).

This sequence belongs to the shikimate dehydrogenase family. In terms of assembly, homodimer.

It catalyses the reaction shikimate + NADP(+) = 3-dehydroshikimate + NADPH + H(+). It functions in the pathway metabolic intermediate biosynthesis; chorismate biosynthesis; chorismate from D-erythrose 4-phosphate and phosphoenolpyruvate: step 4/7. Involved in the biosynthesis of the chorismate, which leads to the biosynthesis of aromatic amino acids. Catalyzes the reversible NADPH linked reduction of 3-dehydroshikimate (DHSA) to yield shikimate (SA). The sequence is that of Shikimate dehydrogenase (NADP(+)) from Bartonella quintana (strain Toulouse) (Rochalimaea quintana).